A 275-amino-acid chain; its full sequence is Formamidopyrimidine-DNA glycosylase (275 aa).

The Schiff-base intermediate with DNA role is filled by proline 2. Glutamate 3 acts as the Proton donor in catalysis. Lysine 58 (proton donor; for beta-elimination activity) is an active-site residue. Positions 91 and 110 each coordinate DNA. The FPG-type zinc-finger motif lies at 238–272; that stretch reads QVYGQTGKPCPRCGQAIVKLKVGGRGTHICPKCQK. Residue arginine 262 is the Proton donor; for delta-elimination activity of the active site.

This sequence belongs to the FPG family. As to quaternary structure, monomer. The cofactor is Zn(2+).

It carries out the reaction Hydrolysis of DNA containing ring-opened 7-methylguanine residues, releasing 2,6-diamino-4-hydroxy-5-(N-methyl)formamidopyrimidine.. The enzyme catalyses 2'-deoxyribonucleotide-(2'-deoxyribose 5'-phosphate)-2'-deoxyribonucleotide-DNA = a 3'-end 2'-deoxyribonucleotide-(2,3-dehydro-2,3-deoxyribose 5'-phosphate)-DNA + a 5'-end 5'-phospho-2'-deoxyribonucleoside-DNA + H(+). Its function is as follows. Involved in base excision repair of DNA damaged by oxidation or by mutagenic agents. Acts as a DNA glycosylase that recognizes and removes damaged bases. Has a preference for oxidized purines, such as 7,8-dihydro-8-oxoguanine (8-oxoG). Has AP (apurinic/apyrimidinic) lyase activity and introduces nicks in the DNA strand. Cleaves the DNA backbone by beta-delta elimination to generate a single-strand break at the site of the removed base with both 3'- and 5'-phosphates. This is Formamidopyrimidine-DNA glycosylase from Streptococcus pyogenes serotype M28 (strain MGAS6180).